The chain runs to 205 residues: Ribosomal RNA small subunit methyltransferase G (205 aa).

Residues Gly-66, Phe-71, 119-120, and Arg-135 contribute to the S-adenosyl-L-methionine site; that span reads IE.

Belongs to the methyltransferase superfamily. RNA methyltransferase RsmG family.

It localises to the cytoplasm. The enzyme catalyses guanosine(527) in 16S rRNA + S-adenosyl-L-methionine = N(7)-methylguanosine(527) in 16S rRNA + S-adenosyl-L-homocysteine. Functionally, specifically methylates the N7 position of guanine in position 527 of 16S rRNA. This Rhizobium etli (strain CIAT 652) protein is Ribosomal RNA small subunit methyltransferase G.